Here is a 187-residue protein sequence, read N- to C-terminus: Cell division protein SepF (187 aa).

Positions 21 to 97 (EVEVPDKQQQ…ATPNNASQES (77 aa)) are disordered. 2 stretches are compositionally biased toward polar residues: residues 38–63 (EQSQ…YTTT) and 70–97 (RMSN…SQES).

Belongs to the SepF family. In terms of assembly, homodimer. Interacts with FtsZ.

Its subcellular location is the cytoplasm. Its function is as follows. Cell division protein that is part of the divisome complex and is recruited early to the Z-ring. Probably stimulates Z-ring formation, perhaps through the cross-linking of FtsZ protofilaments. Its function overlaps with FtsA. This chain is Cell division protein SepF, found in Staphylococcus aureus (strain MRSA252).